The primary structure comprises 63 residues: Conotoxin Vi5.1b (63 aa).

Positions 1 to 22 are cleaved as a signal peptide; the sequence is MLCVPVFIILFIIIPFAPTSES. Positions 23-50 are excised as a propeptide; that stretch reads QPKTKEEVAKASVHDNAERTLQRLWNQS. At Pro-62 the chain carries Proline amide.

This sequence belongs to the conotoxin T superfamily. In terms of processing, contains 2 disulfide bonds that can be either 'C1-C3, C2-C4' or 'C1-C4, C2-C3', since these disulfide connectivities have been observed for conotoxins with cysteine framework V (for examples, see AC P0DQQ7 and AC P81755). Expressed by the venom duct.

Its subcellular location is the secreted. The chain is Conotoxin Vi5.1b from Conus virgo (Virgin cone).